The following is a 609-amino-acid chain: Elongation factor 4 (609 aa).

The tr-type G domain occupies 11–193 (ERIRNFSIIA…QIVEKIPAPS (183 aa)). GTP-binding positions include 23–28 (DHGKST) and 140–143 (NKID).

It belongs to the TRAFAC class translation factor GTPase superfamily. Classic translation factor GTPase family. LepA subfamily.

Its subcellular location is the cell membrane. The enzyme catalyses GTP + H2O = GDP + phosphate + H(+). In terms of biological role, required for accurate and efficient protein synthesis under certain stress conditions. May act as a fidelity factor of the translation reaction, by catalyzing a one-codon backward translocation of tRNAs on improperly translocated ribosomes. Back-translocation proceeds from a post-translocation (POST) complex to a pre-translocation (PRE) complex, thus giving elongation factor G a second chance to translocate the tRNAs correctly. Binds to ribosomes in a GTP-dependent manner. This chain is Elongation factor 4, found in Geobacillus thermodenitrificans (strain NG80-2).